Consider the following 227-residue polypeptide: 2-C-methyl-D-erythritol 4-phosphate cytidylyltransferase (227 aa).

This sequence belongs to the IspD/TarI cytidylyltransferase family. IspD subfamily.

The catalysed reaction is 2-C-methyl-D-erythritol 4-phosphate + CTP + H(+) = 4-CDP-2-C-methyl-D-erythritol + diphosphate. It functions in the pathway isoprenoid biosynthesis; isopentenyl diphosphate biosynthesis via DXP pathway; isopentenyl diphosphate from 1-deoxy-D-xylulose 5-phosphate: step 2/6. In terms of biological role, catalyzes the formation of 4-diphosphocytidyl-2-C-methyl-D-erythritol from CTP and 2-C-methyl-D-erythritol 4-phosphate (MEP). This Dehalococcoides mccartyi (strain CBDB1) protein is 2-C-methyl-D-erythritol 4-phosphate cytidylyltransferase.